A 433-amino-acid chain; its full sequence is MKKMTVCFLVLMMLLTLVIAGCSAEKSSGKSGETELTFWTFNGLHEQFYVEMVKEWNKKYPDRKIKLNTVVYPYGQMHDNLSISLIAGEGVPDIADVELARFSNFLKGSDIPLADLTPLIEKDRDKFVEARLTLYSKNGKLYGLDTHVGTTVMFYNMDVMKKAGVNPDDIKTWDDYHKAGQKVRKVTGKPMGTVETNDSATFLSMISQQNSGYFDKNGKLILNNDTNVKTLQYLKDMINDKTMIPAPGGGHHSEEYYGFMNQGGAASVLMPIWYMGRFIDYMPDLKGKIAIRPLPAWKEGGDRSAGLGGTATVVPKQSKHVELAKEFLAFAKGSEEGNKKLWSVLGFDPLRWDVWSSKELKEKNKYTDYFQNGTGIFSVLLDIKDEINPIYLHEDFAKASDLVNRSVLFDALKSQQKTPKQALDRAAGELKQK.

A signal peptide spans 1–21 (MKKMTVCFLVLMMLLTLVIAG). A lipid anchor (N-palmitoyl cysteine) is attached at Cys22. Cys22 is lipidated: S-diacylglycerol cysteine.

Belongs to the bacterial solute-binding protein 1 family. As to quaternary structure, the complex is composed of two ATP-binding proteins (MsmX), two transmembrane proteins (AraP and AraQ) and a solute-binding protein (AraN).

Its subcellular location is the cell membrane. Its function is as follows. Part of the ABC transporter complex AraNPQ involved in the uptake of arabinooligosaccharides. Transports alpha-1,5-arabinooligosaccharides, at least up to four L-arabinosyl units. AraN captures the substrate and delivers it to the two transmembrane components. This is Arabinooligosaccharide-binding protein from Bacillus subtilis (strain 168).